Here is a 389-residue protein sequence, read N- to C-terminus: Probable serine/threonine-protein kinase PBL11 (389 aa).

Gly2 carries N-myristoyl glycine lipidation. Cys4 carries S-palmitoyl cysteine lipidation. The Protein kinase domain occupies 68 to 353; sequence FRPDSVVGEG…NEIVKTMEEL (286 aa). Residues 74–82 and Lys106 each bind ATP; that span reads VGEGGFGCV. Residue Tyr151 is modified to Phosphotyrosine. The active-site Proton acceptor is Asp203. Residues Ser207 and Ser237 each carry the phosphoserine modification. 2 positions are modified to phosphothreonine: Thr238 and Thr243. Tyr251 bears the Phosphotyrosine mark.

Belongs to the protein kinase superfamily. Ser/Thr protein kinase family. Roots, leaves and stems.

The protein localises to the cell membrane. The enzyme catalyses L-seryl-[protein] + ATP = O-phospho-L-seryl-[protein] + ADP + H(+). It catalyses the reaction L-threonyl-[protein] + ATP = O-phospho-L-threonyl-[protein] + ADP + H(+). Its function is as follows. May play a role in the regulation of plant growth and development. May be involved in plant defense signaling. This is Probable serine/threonine-protein kinase PBL11 from Arabidopsis thaliana (Mouse-ear cress).